The sequence spans 272 residues: Probable feruloyl esterase C (272 aa).

A signal peptide spans 1-22; it reads MVPTMIYSAILALSAFTPSVLA.

This sequence belongs to the faeC family.

It localises to the secreted. The enzyme catalyses feruloyl-polysaccharide + H2O = ferulate + polysaccharide.. Functionally, involved in degradation of plant cell walls. Hydrolyzes the feruloyl-arabinose ester bond in arabinoxylans, and the feruloyl-galactose ester bond in pectin. Active against paranitrophenyl-acetate, methyl ferulate and wheat arabinoxylan. The chain is Probable feruloyl esterase C (faeC) from Neosartorya fischeri (strain ATCC 1020 / DSM 3700 / CBS 544.65 / FGSC A1164 / JCM 1740 / NRRL 181 / WB 181) (Aspergillus fischerianus).